Here is an 862-residue protein sequence, read N- to C-terminus: Protein translocase subunit SecA (862 aa).

ATP contacts are provided by residues Q88, 106 to 110, and D506; that span reads GEGKT. The Zn(2+) site is built by C839, C841, C850, and H851.

The protein belongs to the SecA family. In terms of assembly, monomer and homodimer. Part of the essential Sec protein translocation apparatus which comprises SecA, SecYEG and auxiliary proteins SecDF-YajC and YidC. The cofactor is Zn(2+).

It is found in the cell inner membrane. Its subcellular location is the cytoplasm. The catalysed reaction is ATP + H2O + cellular proteinSide 1 = ADP + phosphate + cellular proteinSide 2.. Its function is as follows. Part of the Sec protein translocase complex. Interacts with the SecYEG preprotein conducting channel. Has a central role in coupling the hydrolysis of ATP to the transfer of proteins into and across the cell membrane, serving as an ATP-driven molecular motor driving the stepwise translocation of polypeptide chains across the membrane. The chain is Protein translocase subunit SecA from Campylobacter jejuni subsp. doylei (strain ATCC BAA-1458 / RM4099 / 269.97).